We begin with the raw amino-acid sequence, 389 residues long: S-adenosylmethionine synthase (389 aa).

Histidine 17 lines the ATP pocket. Aspartate 19 serves as a coordination point for Mg(2+). Glutamate 45 is a K(+) binding site. Glutamate 58 and glutamine 101 together coordinate L-methionine. Residues 101–111 form a flexible loop region; sequence QSPDISQGVTE. ATP-binding positions include 168–170, 234–235, aspartate 243, 249–250, alanine 266, and lysine 270; these read DSK, RF, and RK. Aspartate 243 provides a ligand contact to L-methionine. An L-methionine-binding site is contributed by lysine 274.

Belongs to the AdoMet synthase family. Homotetramer; dimer of dimers. The cofactor is Mg(2+). It depends on K(+) as a cofactor.

It localises to the cytoplasm. It catalyses the reaction L-methionine + ATP + H2O = S-adenosyl-L-methionine + phosphate + diphosphate. It participates in amino-acid biosynthesis; S-adenosyl-L-methionine biosynthesis; S-adenosyl-L-methionine from L-methionine: step 1/1. Catalyzes the formation of S-adenosylmethionine (AdoMet) from methionine and ATP. The overall synthetic reaction is composed of two sequential steps, AdoMet formation and the subsequent tripolyphosphate hydrolysis which occurs prior to release of AdoMet from the enzyme. The protein is S-adenosylmethionine synthase of Syntrophotalea carbinolica (strain DSM 2380 / NBRC 103641 / GraBd1) (Pelobacter carbinolicus).